A 919-amino-acid chain; its full sequence is Isoleucine--tRNA ligase (919 aa).

The 'HIGH' region signature appears at 57 to 67 (PYANGDIHMGT). Glu552 contacts L-isoleucyl-5'-AMP. Residues 593-597 (KMSKS) carry the 'KMSKS' region motif. Lys596 is a binding site for ATP. Zn(2+) contacts are provided by Cys886, Cys889, Cys906, and Cys909.

This sequence belongs to the class-I aminoacyl-tRNA synthetase family. IleS type 1 subfamily. As to quaternary structure, monomer. Zn(2+) serves as cofactor.

It localises to the cytoplasm. It catalyses the reaction tRNA(Ile) + L-isoleucine + ATP = L-isoleucyl-tRNA(Ile) + AMP + diphosphate. Its function is as follows. Catalyzes the attachment of isoleucine to tRNA(Ile). As IleRS can inadvertently accommodate and process structurally similar amino acids such as valine, to avoid such errors it has two additional distinct tRNA(Ile)-dependent editing activities. One activity is designated as 'pretransfer' editing and involves the hydrolysis of activated Val-AMP. The other activity is designated 'posttransfer' editing and involves deacylation of mischarged Val-tRNA(Ile). The protein is Isoleucine--tRNA ligase of Petrotoga mobilis (strain DSM 10674 / SJ95).